A 385-amino-acid polypeptide reads, in one-letter code: Homoserine O-succinyltransferase (385 aa).

An AB hydrolase-1 domain is found at 45–355 (NAVLVCHALN…SHGHDAFLLD (311 aa)). Catalysis depends on Ser-151, which acts as the Nucleophile. Arg-221 serves as a coordination point for substrate. Active-site residues include Asp-316 and His-349. Substrate is bound at residue Asp-350.

The protein belongs to the AB hydrolase superfamily. MetX family. Homodimer.

Its subcellular location is the cytoplasm. The enzyme catalyses L-homoserine + succinyl-CoA = O-succinyl-L-homoserine + CoA. It functions in the pathway amino-acid biosynthesis; L-methionine biosynthesis via de novo pathway; O-succinyl-L-homoserine from L-homoserine: step 1/1. Its function is as follows. Transfers a succinyl group from succinyl-CoA to L-homoserine, forming succinyl-L-homoserine. The protein is Homoserine O-succinyltransferase of Herminiimonas arsenicoxydans.